We begin with the raw amino-acid sequence, 184 residues long: GTP cyclohydrolase 1 (184 aa).

3 residues coordinate Zn(2+): Cys75, His78, and Cys146.

It belongs to the GTP cyclohydrolase I family. In terms of assembly, toroid-shaped homodecamer, composed of two pentamers of five dimers.

It catalyses the reaction GTP + H2O = 7,8-dihydroneopterin 3'-triphosphate + formate + H(+). Its pathway is cofactor biosynthesis; 7,8-dihydroneopterin triphosphate biosynthesis; 7,8-dihydroneopterin triphosphate from GTP: step 1/1. This chain is GTP cyclohydrolase 1, found in Pseudoalteromonas translucida (strain TAC 125).